The following is a 422-amino-acid chain: Anhydromevalonate phosphate decarboxylase (422 aa).

Residues N134 and E197 each contribute to the Mn(2+) site. D244 (proton acceptor) is an active-site residue.

Belongs to the UbiD family. Prenylated FMN is required as a cofactor. Requires Mn(2+) as cofactor.

The catalysed reaction is (2E)-3-methyl-5-phosphooxypent-2-enoate + H(+) = isopentenyl phosphate + CO2. Its pathway is isoprenoid biosynthesis; isopentenyl diphosphate biosynthesis via mevalonate pathway. Functionally, catalyzes the conversion of trans-anhydromevalonate 5-phosphate (tAHMP) into isopentenyl phosphate. Involved in the archaeal mevalonate (MVA) pathway, which provides fundamental precursors for isoprenoid biosynthesis, such as isopentenyl diphosphate (IPP) and dimethylallyl diphosphate (DMAPP). The polypeptide is Anhydromevalonate phosphate decarboxylase (Methanosarcina mazei (strain ATCC BAA-159 / DSM 3647 / Goe1 / Go1 / JCM 11833 / OCM 88) (Methanosarcina frisia)).